Reading from the N-terminus, the 298-residue chain is ATP synthase gamma chain (298 aa).

This sequence belongs to the ATPase gamma chain family. F-type ATPases have 2 components, CF(1) - the catalytic core - and CF(0) - the membrane proton channel. CF(1) has five subunits: alpha(3), beta(3), gamma(1), delta(1), epsilon(1). CF(0) has three main subunits: a, b and c.

It is found in the cell inner membrane. Produces ATP from ADP in the presence of a proton gradient across the membrane. The gamma chain is believed to be important in regulating ATPase activity and the flow of protons through the CF(0) complex. In Granulibacter bethesdensis (strain ATCC BAA-1260 / CGDNIH1), this protein is ATP synthase gamma chain.